The chain runs to 796 residues: Merozoite surface protein P92 (796 aa).

Residues Met-1 to Ala-26 form the signal peptide. N-linked (GlcNAc...) asparagine glycosylation is found at Asn-27, Asn-37, Asn-65, Asn-71, Asn-168, Asn-240, Asn-275, Asn-359, Asn-502, Asn-511, Asn-607, Asn-633, Asn-728, and Asn-765. The region spanning Lys-571–Lys-720 is the 6-Cys domain. 2 cysteine pairs are disulfide-bonded: Cys-614/Cys-691 and Cys-625/Cys-689.

Interacts with host complement factor CFH isoform 1 (via sushi 4-6 domains) and CFH isoform FHL-1 (via sushi 4-6 domains); this interaction recruits CFH onto the merozoite surface preventing complement-mediated cell lysis. The interaction does not affect CFH activity.

It localises to the cell surface. Its subcellular location is the cell membrane. Functionally, during the asexual blood stage, recruits host complement factor H CFH to the surface of merozoites resulting in the down-regulation of the host complement alternative pathway and thus, protecting merozoites from complement-mediated lysis. The polypeptide is Merozoite surface protein P92 (Plasmodium falciparum (isolate 3D7)).